The sequence spans 405 residues: Arginine deiminase (405 aa).

The active-site Amidino-cysteine intermediate is the C395.

Belongs to the arginine deiminase family.

The protein resides in the cytoplasm. It catalyses the reaction L-arginine + H2O = L-citrulline + NH4(+). Its pathway is amino-acid degradation; L-arginine degradation via ADI pathway; carbamoyl phosphate from L-arginine: step 1/2. This chain is Arginine deiminase, found in Rhodococcus jostii (strain RHA1).